A 332-amino-acid chain; its full sequence is Melanocortin receptor 4 (332 aa).

Residues 1–43 lie on the Extracellular side of the membrane; it reads MNSTHHHGMHTSLHFWNRSTYGLHSNASEPLGKGYSEGGCYEQ. Residues asparagine 2, asparagine 17, and asparagine 26 are each glycosylated (N-linked (GlcNAc...) asparagine). 2 disulfide bridges follow: cysteine 40-cysteine 279 and cysteine 271-cysteine 277. The helical transmembrane segment at 44 to 69 threads the bilayer; that stretch reads LFVSPEVFVTLGVISLLENILVIVAI. The Cytoplasmic segment spans residues 70 to 81; that stretch reads AKNKNLHSPMYF. Residues 82 to 106 traverse the membrane as a helical segment; sequence FICSLAVADMLVSVSNGSETIVITL. Residues glutamate 100, aspartate 122, and aspartate 126 each coordinate Ca(2+). The Extracellular portion of the chain corresponds to 107 to 123; sequence LNSTDTDAQSFTVNIDN. Residues 124–145 form a helical membrane-spanning segment; sequence VIDSVICSSLLASICSLLSIAV. Over 146–165 the chain is Cytoplasmic; sequence DRYFTIFYALQYHNIMTVKR. A helical membrane pass occupies residues 166-186; it reads VGIIISCIWAVCTVSGVLFII. Residues 187-191 are Extracellular-facing; the sequence is YSDSS. A helical membrane pass occupies residues 192–215; it reads AVIICLITVFFTMLALMASLYVHM. Residues 216–248 lie on the Cytoplasmic side of the membrane; that stretch reads FLMARLHIKRIAVLPGTGTIRQGANMKGAITLT. A helical transmembrane segment spans residues 249-271; it reads ILIGVFVVCWAPFFLHLIFYISC. The Extracellular portion of the chain corresponds to 272-280; that stretch reads PQNPYCVCF. The helical transmembrane segment at 281–304 threads the bilayer; it reads MSHFNLYLILIMCNSIIDPLIYAL. Residues 305–332 are Cytoplasmic-facing; that stretch reads RSQELRKTFKEIICCYPLGGLCDLSSRY. Residue cysteine 318 is the site of S-palmitoyl cysteine attachment.

Belongs to the G-protein coupled receptor 1 family. Homodimer; disulfide-linked, also forms higher order oligomers. Interacts with GNAS. Interacts with ATRNL1. Interacts with MGRN1; this interaction competes with GNAS-binding and thus inhibits agonist-induced cAMP production. Interacts with MRAP and MRAP2; these associated factors increase ligand-sensitivity and generation of cAMP.

It is found in the cell membrane. Hormone receptor that acts as a key component of the leptin-melanocortin pathway at the intersection of homeostatic maintenance of energetic state. Plays a role in regulating food intake: activation by a stimulating hormone such as anorexigenic alpha-melanocyte stimulating hormone (alpha-MSH) inhibits appetite, whereas binding to a natural antagonist like Agouti-related protein/AGRP promotes appetite. G-protein-coupled receptor that activates conventional Galphas signaling leading to induction of anorexogenic signaling in the hypothalamus to result in negative energy balance. Regulates the firing activity of neurons from the hypothalamus by alpha-MSH and AGRP independently of Galphas signaling by ligand-induced coupling of closure of inwardly rectifying potassium channel KCNJ13. In intestinal epithelial cells, plays a role in the inhibition of hepatic glucose production via nesfatin-1/NUCB2 leading to increased cyclic adenosine monophosphate (cAMP) levels and glucagon-like peptide 1 (GLP-1) secretion in the intestinal epithelium. The sequence is that of Melanocortin receptor 4 (MC4R) from Sus scrofa (Pig).